The following is a 265-amino-acid chain: Ribosomal RNA small subunit methyltransferase A (265 aa).

6 residues coordinate S-adenosyl-L-methionine: H13, L15, G40, E61, D85, and N103.

It belongs to the class I-like SAM-binding methyltransferase superfamily. rRNA adenine N(6)-methyltransferase family. RsmA subfamily.

The protein localises to the cytoplasm. The catalysed reaction is adenosine(1518)/adenosine(1519) in 16S rRNA + 4 S-adenosyl-L-methionine = N(6)-dimethyladenosine(1518)/N(6)-dimethyladenosine(1519) in 16S rRNA + 4 S-adenosyl-L-homocysteine + 4 H(+). Its function is as follows. Specifically dimethylates two adjacent adenosines (A1518 and A1519) in the loop of a conserved hairpin near the 3'-end of 16S rRNA in the 30S particle. May play a critical role in biogenesis of 30S subunits. This Bordetella pertussis (strain Tohama I / ATCC BAA-589 / NCTC 13251) protein is Ribosomal RNA small subunit methyltransferase A.